A 109-amino-acid chain; its full sequence is uncharacterized protein (109 aa).

The protein localises to the mitochondrion. This is an uncharacterized protein from Arabidopsis thaliana (Mouse-ear cress).